The following is a 355-amino-acid chain: Protein RecA (355 aa).

65–72 (GPESSGKT) contributes to the ATP binding site.

It belongs to the RecA family.

It is found in the cytoplasm. In terms of biological role, can catalyze the hydrolysis of ATP in the presence of single-stranded DNA, the ATP-dependent uptake of single-stranded DNA by duplex DNA, and the ATP-dependent hybridization of homologous single-stranded DNAs. It interacts with LexA causing its activation and leading to its autocatalytic cleavage. This chain is Protein RecA, found in Pseudomonas entomophila (strain L48).